Reading from the N-terminus, the 348-residue chain is D-alanine--D-alanine ligase (348 aa).

An ATP-grasp domain is found at 132–334; sequence KRVLESAGIA…YPDLIEKLVA (203 aa). Residue 162 to 217 participates in ATP binding; it reads EEKLSYPVFTKPSNMGSSVGISKSDNQEELRASLDLAFKYDSRVLVEQGVTAREIE. Positions 288, 301, and 303 each coordinate Mg(2+).

The protein belongs to the D-alanine--D-alanine ligase family. Requires Mg(2+) as cofactor. Mn(2+) is required as a cofactor.

It localises to the cytoplasm. The enzyme catalyses 2 D-alanine + ATP = D-alanyl-D-alanine + ADP + phosphate + H(+). It functions in the pathway cell wall biogenesis; peptidoglycan biosynthesis. Its function is as follows. Cell wall formation. The chain is D-alanine--D-alanine ligase from Streptococcus gordonii (strain Challis / ATCC 35105 / BCRC 15272 / CH1 / DL1 / V288).